Here is a 137-residue protein sequence, read N- to C-terminus: Large ribosomal subunit protein uL16 (137 aa).

The span at 1 to 13 (MLQPKRRKYRKEQ) shows a compositional bias: basic residues. The disordered stretch occupies residues 1–22 (MLQPKRRKYRKEQKGRNTGVAT).

This sequence belongs to the universal ribosomal protein uL16 family. Part of the 50S ribosomal subunit.

Binds 23S rRNA and is also seen to make contacts with the A and possibly P site tRNAs. The polypeptide is Large ribosomal subunit protein uL16 (Polynucleobacter asymbioticus (strain DSM 18221 / CIP 109841 / QLW-P1DMWA-1) (Polynucleobacter necessarius subsp. asymbioticus)).